The sequence spans 158 residues: NAD(P)H-quinone oxidoreductase subunit J, chloroplastic (158 aa).

Belongs to the complex I 30 kDa subunit family. As to quaternary structure, NDH is composed of at least 16 different subunits, 5 of which are encoded in the nucleus.

The protein localises to the plastid. Its subcellular location is the chloroplast thylakoid membrane. The enzyme catalyses a plastoquinone + NADH + (n+1) H(+)(in) = a plastoquinol + NAD(+) + n H(+)(out). It catalyses the reaction a plastoquinone + NADPH + (n+1) H(+)(in) = a plastoquinol + NADP(+) + n H(+)(out). Its function is as follows. NDH shuttles electrons from NAD(P)H:plastoquinone, via FMN and iron-sulfur (Fe-S) centers, to quinones in the photosynthetic chain and possibly in a chloroplast respiratory chain. The immediate electron acceptor for the enzyme in this species is believed to be plastoquinone. Couples the redox reaction to proton translocation, and thus conserves the redox energy in a proton gradient. This is NAD(P)H-quinone oxidoreductase subunit J, chloroplastic from Lemna minor (Common duckweed).